The sequence spans 300 residues: N-acetylmannosamine kinase (300 aa).

Residues 5-12 (ALDIGGTK) and 132-139 (GVGGGIVL) each bind ATP. H156, C166, C168, and C173 together coordinate Zn(2+).

This sequence belongs to the ROK (NagC/XylR) family. NanK subfamily. As to quaternary structure, homodimer.

It carries out the reaction an N-acyl-D-mannosamine + ATP = an N-acyl-D-mannosamine 6-phosphate + ADP + H(+). Its pathway is amino-sugar metabolism; N-acetylneuraminate degradation; D-fructose 6-phosphate from N-acetylneuraminate: step 2/5. In terms of biological role, catalyzes the phosphorylation of N-acetylmannosamine (ManNAc) to ManNAc-6-P. The chain is N-acetylmannosamine kinase from Haemophilus influenzae (strain PittGG).